The sequence spans 313 residues: Pyrimidine-specific ribonucleoside hydrolase RihB (313 aa).

The Proton acceptor role is filled by Asp-11. Asp-11, Asp-16, and Val-124 together coordinate Ca(2+). Substrate contacts are provided by Gln-227 and His-239. Asp-240 lines the Ca(2+) pocket.

It belongs to the IUNH family. RihB subfamily. In terms of assembly, homotetramer. It depends on Ca(2+) as a cofactor.

It catalyses the reaction a pyrimidine ribonucleoside + H2O = a pyrimidine nucleobase + D-ribose. Hydrolyzes cytidine or uridine to ribose and cytosine or uracil, respectively. Has a clear preference for cytidine over uridine. Strictly specific for ribonucleosides. The protein is Pyrimidine-specific ribonucleoside hydrolase RihB of Escherichia coli (strain K12 / DH10B).